The sequence spans 418 residues: Serine hydroxymethyltransferase (418 aa).

(6S)-5,6,7,8-tetrahydrofolate is bound by residues leucine 117 and 121 to 123 (GHL). Lysine 225 bears the N6-(pyridoxal phosphate)lysine mark.

The protein belongs to the SHMT family. Homodimer. Requires pyridoxal 5'-phosphate as cofactor.

Its subcellular location is the cytoplasm. It carries out the reaction (6R)-5,10-methylene-5,6,7,8-tetrahydrofolate + glycine + H2O = (6S)-5,6,7,8-tetrahydrofolate + L-serine. It participates in one-carbon metabolism; tetrahydrofolate interconversion. The protein operates within amino-acid biosynthesis; glycine biosynthesis; glycine from L-serine: step 1/1. Functionally, catalyzes the reversible interconversion of serine and glycine with tetrahydrofolate (THF) serving as the one-carbon carrier. This reaction serves as the major source of one-carbon groups required for the biosynthesis of purines, thymidylate, methionine, and other important biomolecules. Also exhibits THF-independent aldolase activity toward beta-hydroxyamino acids, producing glycine and aldehydes, via a retro-aldol mechanism. The chain is Serine hydroxymethyltransferase from Mycoplasma mobile (strain ATCC 43663 / 163K / NCTC 11711) (Mesomycoplasma mobile).